Consider the following 291-residue polypeptide: Acetylglutamate kinase (291 aa).

Residues 64-65, Arg-86, and Asn-190 contribute to the substrate site; that span reads GG.

The protein belongs to the acetylglutamate kinase family. ArgB subfamily.

It localises to the cytoplasm. The catalysed reaction is N-acetyl-L-glutamate + ATP = N-acetyl-L-glutamyl 5-phosphate + ADP. The protein operates within amino-acid biosynthesis; L-arginine biosynthesis; N(2)-acetyl-L-ornithine from L-glutamate: step 2/4. Functionally, catalyzes the ATP-dependent phosphorylation of N-acetyl-L-glutamate. This chain is Acetylglutamate kinase, found in Leptospira borgpetersenii serovar Hardjo-bovis (strain JB197).